We begin with the raw amino-acid sequence, 280 residues long: Pantothenate synthetase (280 aa).

Position 32–39 (Met32–His39) interacts with ATP. Catalysis depends on His39, which acts as the Proton donor. Position 63 (Gln63) interacts with (R)-pantoate. Gln63 lines the beta-alanine pocket. Residue Gly149 to Asp152 participates in ATP binding. Gln155 contributes to the (R)-pantoate binding site. ATP-binding positions include Val178 and Met186–Arg189.

Belongs to the pantothenate synthetase family. In terms of assembly, homodimer.

It localises to the cytoplasm. The catalysed reaction is (R)-pantoate + beta-alanine + ATP = (R)-pantothenate + AMP + diphosphate + H(+). Its pathway is cofactor biosynthesis; (R)-pantothenate biosynthesis; (R)-pantothenate from (R)-pantoate and beta-alanine: step 1/1. Functionally, catalyzes the condensation of pantoate with beta-alanine in an ATP-dependent reaction via a pantoyl-adenylate intermediate. The chain is Pantothenate synthetase from Ruegeria sp. (strain TM1040) (Silicibacter sp.).